A 137-amino-acid polypeptide reads, in one-letter code: Putative pre-16S rRNA nuclease (137 aa).

The protein belongs to the YqgF nuclease family.

Its subcellular location is the cytoplasm. In terms of biological role, could be a nuclease involved in processing of the 5'-end of pre-16S rRNA. This chain is Putative pre-16S rRNA nuclease, found in Mycoplasmopsis synoviae (strain 53) (Mycoplasma synoviae).